Reading from the N-terminus, the 466-residue chain is Chromogranin-A (466 aa).

The signal sequence occupies residues 1-18 (MRSSAALALLLCAGQVFA). A disulfide bridge connects residues Cys35 and Cys56. Positions 91-443 (AQQQQQQQQQ…ANRRAEDQEL (353 aa)) are disordered. Residues 92-111 (QQQQQQQQQQQQQQQQQQQQ) are compositionally biased toward low complexity. Ser114 carries the phosphoserine modification. The span at 131 to 155 (KHGDAASEAPSKDTVEKREDSDKGQ) shows a compositional bias: basic and acidic residues. Over residues 177–213 (ESSMMGNSQSPGEDTANNTQSPTSLPSQEHGIPQTTE) the composition is skewed to polar residues. Ser215 carries the phosphoserine modification. Residues 233–247 (KEEEEEEKEEEEEEK) are compositionally biased toward acidic residues. The span at 248 to 259 (EEKAIAREKAGP) shows a compositional bias: basic and acidic residues. Phosphoserine is present on residues Ser288 and Ser312. Positions 305–314 (GKGELEHSQQ) are enriched in basic and acidic residues. At Gly332 the chain carries Glycine amide. Positions 351–378 (RLSREWEDKRWSRMDQLAKELTAEKRLE) are enriched in basic and acidic residues. A phosphoserine mark is found at Ser353 and Ser386. At Met387 the chain carries Methionine sulfoxide. Residues 412–440 (SSREDSVEARGDFEEKKEEEGSANRRAED) show a composition bias toward basic and acidic residues. Phosphoserine occurs at positions 413, 417, and 433. O-linked (Xyl...) (chondroitin sulfate) serine glycosylation occurs at Ser433. The residue at position 441 (Gln441) is a Pyrrolidone carboxylic acid. Ser447 is subject to Phosphoserine.

The protein belongs to the chromogranin/secretogranin protein family. As to quaternary structure, self-interacts; self-assembly is promoted in vitro by chondroitin sulfate attachment which occurs at mildly acidic pH conditions. Interacts with SCG3; this interaction is optimal in conditions mimicking the lumenal milieu of the trans-Golgi network, i.e. pH 5.5 and 10 mM Ca(+2). Interacts with ITPR1 in the secretory granules. In terms of processing, O-glycosylated; contains chondroitin sulfate (CS). CS attachment is pH-dependent, being observed at mildly acidic conditions of pH 5 but not at neutral pH, and promotes self-assembly in vitro. In terms of tissue distribution, expressed in the brain and adrenal and pituitary glands.

The protein localises to the cytoplasmic vesicle. It is found in the secretory vesicle. Its subcellular location is the neuronal dense core vesicle. The protein resides in the secreted. In terms of biological role, strongly inhibits glucose induced insulin release from the pancreas. Its function is as follows. Catestatin inhibits catecholamine release from chromaffin cells and noradrenergic neurons by acting as a non-competitive nicotinic cholinergic antagonist. Can induce mast cell migration, degranulation and production of cytokines and chemokines. Serpinin regulates granule biogenesis in endocrine cells by up-regulating the transcription of protease nexin 1 (SERPINE2) via a cAMP-PKA-SP1 pathway. This leads to inhibition of granule protein degradation in the Golgi complex which in turn promotes granule formation. Serpinin and pGlu-serpinin can enhance both myocardial contractility (inotropy) and relaxation (lusitropy) and this cardio-stimulation requires a beta 1-adrenergic receptor/adenylate cyclase/cAMP/PKA pathway. This chain is Chromogranin-A (Chga), found in Rattus norvegicus (Rat).